We begin with the raw amino-acid sequence, 215 residues long: Large ribosomal subunit protein uL4 (215 aa).

A disordered region spans residues 46–76; it reads TAKSKNRAEVSGGGRKPWAQKGGGRARAGSI. Over residues 56-71 the composition is skewed to gly residues; the sequence is SGGGRKPWAQKGGGRA.

It belongs to the universal ribosomal protein uL4 family. In terms of assembly, part of the 50S ribosomal subunit.

One of the primary rRNA binding proteins, this protein initially binds near the 5'-end of the 23S rRNA. It is important during the early stages of 50S assembly. It makes multiple contacts with different domains of the 23S rRNA in the assembled 50S subunit and ribosome. Functionally, forms part of the polypeptide exit tunnel. The polypeptide is Large ribosomal subunit protein uL4 (Helicobacter acinonychis (strain Sheeba)).